Reading from the N-terminus, the 95-residue chain is Co-chaperonin GroES (95 aa).

The protein belongs to the GroES chaperonin family. In terms of assembly, heptamer of 7 subunits arranged in a ring. Interacts with the chaperonin GroEL.

It is found in the cytoplasm. In terms of biological role, together with the chaperonin GroEL, plays an essential role in assisting protein folding. The GroEL-GroES system forms a nano-cage that allows encapsulation of the non-native substrate proteins and provides a physical environment optimized to promote and accelerate protein folding. GroES binds to the apical surface of the GroEL ring, thereby capping the opening of the GroEL channel. The sequence is that of Co-chaperonin GroES from Zymomonas mobilis subsp. mobilis (strain ATCC 31821 / ZM4 / CP4).